The following is a 163-amino-acid chain: Arginine repressor (163 aa).

The protein belongs to the ArgR family.

It is found in the cytoplasm. Its pathway is amino-acid biosynthesis; L-arginine biosynthesis [regulation]. Regulates arginine biosynthesis genes. The protein is Arginine repressor of Anaeromyxobacter dehalogenans (strain 2CP-C).